The primary structure comprises 416 residues: D-amino acid dehydrogenase (416 aa).

Residue 3 to 17 (ITILGSGVIGVTTAY) coordinates FAD.

It belongs to the DadA oxidoreductase family. The cofactor is FAD.

The enzyme catalyses a D-alpha-amino acid + A + H2O = a 2-oxocarboxylate + AH2 + NH4(+). It participates in amino-acid degradation; D-alanine degradation; NH(3) and pyruvate from D-alanine: step 1/1. In terms of biological role, oxidative deamination of D-amino acids. This is D-amino acid dehydrogenase from Brucella abortus (strain S19).